The sequence spans 180 residues: MAESELQLVAQRIRSFPDFPIPGVLFRDISPLLKDPASFRASIRLLASHLKSTHGGKIDYIAGLDSRGFLFGPSLAQELGLGCVLIRKRGKLPGPTVSASYALEYGKAELEIQKDALEPGQKVVVVDDLLATGGTMCAACELLGQLQAEVVECVSLVELTSLKGREKLGSVPFFSLLQYE.

N-acetylalanine is present on alanine 2. Phosphoserine is present on residues serine 4, serine 15, and serine 30. Residue tyrosine 60 is modified to Phosphotyrosine. Serine 66 carries the phosphoserine modification. The residue at position 114 (lysine 114) is an N6-acetyllysine. Position 135 is a phosphothreonine (threonine 135).

The protein belongs to the purine/pyrimidine phosphoribosyltransferase family. In terms of assembly, homodimer.

It localises to the cytoplasm. The catalysed reaction is AMP + diphosphate = 5-phospho-alpha-D-ribose 1-diphosphate + adenine. It participates in purine metabolism; AMP biosynthesis via salvage pathway; AMP from adenine: step 1/1. In terms of biological role, catalyzes a salvage reaction resulting in the formation of AMP, that is energically less costly than de novo synthesis. This Cricetulus griseus (Chinese hamster) protein is Adenine phosphoribosyltransferase.